A 357-amino-acid polypeptide reads, in one-letter code: Thiamine thiazole synthase 3, chloroplastic (357 aa).

Residues 1 to 51 constitute a chloroplast transit peptide; it reads MSISAAGVATGLGANVELKSNVGSSSSSVAGVRLFTSRKAQLRRCAAPATS. Substrate contacts are provided by residues A103, 123–124, G131, and A196; that span reads EQ. 2,3-didehydroalanine (Cys) is present on C225. Substrate contacts are provided by residues D227, H242, M294, and 304 to 306; that span reads RMG.

It belongs to the THI4 family. In terms of assembly, homooctamer. Fe cation is required as a cofactor. During the catalytic reaction, a sulfide is transferred from Cys-225 to a reaction intermediate, generating a dehydroalanine residue.

It localises to the plastid. The protein localises to the chloroplast. The enzyme catalyses [ADP-thiazole synthase]-L-cysteine + glycine + NAD(+) = [ADP-thiazole synthase]-dehydroalanine + ADP-5-ethyl-4-methylthiazole-2-carboxylate + nicotinamide + 3 H2O + 2 H(+). Functionally, involved in biosynthesis of the thiamine precursor thiazole. Catalyzes the conversion of NAD and glycine to adenosine diphosphate 5-(2-hydroxyethyl)-4-methylthiazole-2-carboxylic acid (ADT), an adenylated thiazole intermediate. The reaction includes an iron-dependent sulfide transfer from a conserved cysteine residue of the protein to a thiazole intermediate. The enzyme can only undergo a single turnover, which suggests it is a suicide enzyme. May have additional roles in adaptation to various stress conditions and in DNA damage tolerance. This is Thiamine thiazole synthase 3, chloroplastic from Physcomitrium patens (Spreading-leaved earth moss).